Here is a 176-residue protein sequence, read N- to C-terminus: ATP synthase subunit delta (176 aa).

This sequence belongs to the ATPase delta chain family. F-type ATPases have 2 components, F(1) - the catalytic core - and F(0) - the membrane proton channel. F(1) has five subunits: alpha(3), beta(3), gamma(1), delta(1), epsilon(1). F(0) has three main subunits: a(1), b(2) and c(10-14). The alpha and beta chains form an alternating ring which encloses part of the gamma chain. F(1) is attached to F(0) by a central stalk formed by the gamma and epsilon chains, while a peripheral stalk is formed by the delta and b chains.

The protein resides in the cell inner membrane. Its function is as follows. F(1)F(0) ATP synthase produces ATP from ADP in the presence of a proton or sodium gradient. F-type ATPases consist of two structural domains, F(1) containing the extramembraneous catalytic core and F(0) containing the membrane proton channel, linked together by a central stalk and a peripheral stalk. During catalysis, ATP synthesis in the catalytic domain of F(1) is coupled via a rotary mechanism of the central stalk subunits to proton translocation. This protein is part of the stalk that links CF(0) to CF(1). It either transmits conformational changes from CF(0) to CF(1) or is implicated in proton conduction. The chain is ATP synthase subunit delta from Aliarcobacter butzleri (strain RM4018) (Arcobacter butzleri).